We begin with the raw amino-acid sequence, 102 residues long: NADH-quinone oxidoreductase subunit K 1 (102 aa).

The next 3 helical transmembrane spans lie at 5–25 (LSHYLTVSAILFTLGVFGIFL), 31–51 (IVILMSVELILLAVNINMVAF), and 65–85 (LFILTVAAAEAAIGLAILVVF).

This sequence belongs to the complex I subunit 4L family. In terms of assembly, NDH-1 is composed of 14 different subunits. Subunits NuoA, H, J, K, L, M, N constitute the membrane sector of the complex.

It localises to the cell inner membrane. It carries out the reaction a quinone + NADH + 5 H(+)(in) = a quinol + NAD(+) + 4 H(+)(out). Its function is as follows. NDH-1 shuttles electrons from NADH, via FMN and iron-sulfur (Fe-S) centers, to quinones in the respiratory chain. The immediate electron acceptor for the enzyme in this species is believed to be ubiquinone. Couples the redox reaction to proton translocation (for every two electrons transferred, four hydrogen ions are translocated across the cytoplasmic membrane), and thus conserves the redox energy in a proton gradient. In Rhizobium etli (strain ATCC 51251 / DSM 11541 / JCM 21823 / NBRC 15573 / CFN 42), this protein is NADH-quinone oxidoreductase subunit K 1.